The following is a 211-amino-acid chain: ATP phosphoribosyltransferase (211 aa).

Belongs to the ATP phosphoribosyltransferase family. Short subfamily. As to quaternary structure, heteromultimer composed of HisG and HisZ subunits.

It is found in the cytoplasm. The catalysed reaction is 1-(5-phospho-beta-D-ribosyl)-ATP + diphosphate = 5-phospho-alpha-D-ribose 1-diphosphate + ATP. It functions in the pathway amino-acid biosynthesis; L-histidine biosynthesis; L-histidine from 5-phospho-alpha-D-ribose 1-diphosphate: step 1/9. Catalyzes the condensation of ATP and 5-phosphoribose 1-diphosphate to form N'-(5'-phosphoribosyl)-ATP (PR-ATP). Has a crucial role in the pathway because the rate of histidine biosynthesis seems to be controlled primarily by regulation of HisG enzymatic activity. The chain is ATP phosphoribosyltransferase from Bacillus cereus (strain G9842).